The sequence spans 243 residues: Uridylate kinase (243 aa).

Lysine 15–glycine 18 contacts ATP. The tract at residues glycine 23 to glycine 28 is involved in allosteric activation by GTP. Glycine 57 is a binding site for UMP. The ATP site is built by glycine 58 and arginine 62. UMP is bound by residues aspartate 77 and threonine 138 to threonine 145. 3 residues coordinate ATP: threonine 165, phenylalanine 171, and aspartate 174.

This sequence belongs to the UMP kinase family. As to quaternary structure, homohexamer.

The protein localises to the cytoplasm. The catalysed reaction is UMP + ATP = UDP + ADP. It functions in the pathway pyrimidine metabolism; CTP biosynthesis via de novo pathway; UDP from UMP (UMPK route): step 1/1. Allosterically activated by GTP. Inhibited by UTP. Catalyzes the reversible phosphorylation of UMP to UDP. The protein is Uridylate kinase of Aliivibrio fischeri (strain ATCC 700601 / ES114) (Vibrio fischeri).